Reading from the N-terminus, the 415-residue chain is MSRTRTTPGRRVESDVVDIGEHEFESGEILPDLQVAYEAYGEFDGQNAVLVCHGLTGSQHVAGHGTESGVSGQARAWWGDIVGPGKALDTNDYYVICVNVPGSCYGTSGPASEGPDGEPWGTDFPPVTVHDWTRAQRRLLDHLGVGRLHAVVGGSVGGMNALDWAVQFPDDVERLAVVASAARLDSQCLGIDAVARRAITSDPNWNGGDYYGEDRASPDAGLGLARQLGHLMYLSKDSMERKFGRRSAGRGDRGDAFPSDPAAAFFPYREVESYLDYQAEKFAERFDANSYLYLTRAMDDFDLSEGYESDAAALAAFEGESLLVSFTGDWHFTTEQSESLAGAFRRVDAPVAHHVVESDHGHDAFLVEPEKVGPPLGDFVDEGVAGRAVTDTATDGGEPDEEKDFAPVHSSLFSR.

Residues 47 to 369 form the AB hydrolase-1 domain; sequence NAVLVCHGLT…HGHDAFLVEP (323 aa). Serine 155 serves as the catalytic Nucleophile. Arginine 226 contacts substrate. Catalysis depends on residues aspartate 329 and histidine 362. Aspartate 363 is a binding site for substrate. Residues 387–415 are disordered; it reads RAVTDTATDGGEPDEEKDFAPVHSSLFSR.

It belongs to the AB hydrolase superfamily. MetX family. As to quaternary structure, homodimer.

It is found in the cytoplasm. It carries out the reaction L-homoserine + acetyl-CoA = O-acetyl-L-homoserine + CoA. Its pathway is amino-acid biosynthesis; L-methionine biosynthesis via de novo pathway; O-acetyl-L-homoserine from L-homoserine: step 1/1. In terms of biological role, transfers an acetyl group from acetyl-CoA to L-homoserine, forming acetyl-L-homoserine. The protein is Homoserine O-acetyltransferase of Haloferax gibbonsii (strain ATCC 33959 / DSM 4427 / JCM 8863 / NBRC 102184 / NCIMB 2188 / Ma 2.38).